Consider the following 1109-residue polypeptide: ABC transporter G family member 28 (1109 aa).

2 helical membrane-spanning segments follow: residues 5–25 and 291–311; these read NSYF…LILQ and NITA…IILY. Residues 325–411 are disordered; that stretch reads QAKSREKAVQ…DTKKGKKKEK (87 aa). Residues 339–357 show a composition bias toward basic and acidic residues; that stretch reads SQSREKWKSAKDIAKKHAT. Positions 499–741 constitute an ABC transporter domain; the sequence is VAFKDLSITL…FSSLGIVVPE (243 aa). Residue 533–540 participates in ATP binding; that stretch reads GPSGAGKT. Residues 859–1056 form the ABC transmembrane type-2 domain; the sequence is QQYRYFLGRL…ALEAFVVSNA (198 aa). The next 6 helical transmembrane spans lie at 879-899, 904-924, 954-974, 986-1006, 1008-1028, and 1084-1104; these read LAVD…LAKV, FGAM…KITA, TVDH…FYFF, VVLI…AILF, PGPA…IATS, and CLVF…FCMV.

It belongs to the ABC transporter superfamily. ABCG family. Eye pigment precursor importer (TC 3.A.1.204) subfamily.

It localises to the membrane. This Arabidopsis thaliana (Mouse-ear cress) protein is ABC transporter G family member 28 (ABCG28).